We begin with the raw amino-acid sequence, 322 residues long: Breast cancer metastasis-suppressor 1-like protein (322 aa).

Residues M1–M16 are compositionally biased toward basic and acidic residues. The interval M1 to R56 is disordered. Positions E17–D51 are enriched in acidic residues. 2 coiled-coil regions span residues E50–L82 and E147–E178.

This sequence belongs to the BRMS1 family.

It localises to the nucleus. Involved in the histone deacetylase (HDAC1)-dependent transcriptional repression activity. In Xenopus tropicalis (Western clawed frog), this protein is Breast cancer metastasis-suppressor 1-like protein (brms1l).